The following is a 353-amino-acid chain: Protein CYTOKININ-RESPONSIVE GATA TRANSCRIPTION FACTOR 1 (353 aa).

Positions 137-144 (IRKGAATD) match the Nuclear localization signal 1 motif. Residues 142–166 (ATDPEGGAVRKPRRRAQAHQDESQQ) are disordered. The segment at 178 to 203 (CSDCNTTKTPLWRSGPCGPKSLCNAC) adopts a GATA-type zinc-finger fold. Residues 244 to 251 (EKRAADVD) carry the Nuclear localization signal 2 motif.

It belongs to the type IV zinc-finger family. Class B subfamily. Mostly expressed in leaves and stems, and, at low levels, in roots.

It is found in the nucleus. Transcriptional regulator that specifically binds 5'-GATA-3' or 5'-GAT-3' motifs within gene promoters. Influences the expression of nuclear encoded chloroplast-targeted genes. Regulates chloroplast development and promotes chlorophyll accumulation. Modulates plant architecture (e.g. height, length and width of leaf blades, and flowering tillers production) and represses tillering, probably by modulating number of cells. Promotes senescence. Involved in grain filling, panicle development and starch production. This Oryza sativa subsp. japonica (Rice) protein is Protein CYTOKININ-RESPONSIVE GATA TRANSCRIPTION FACTOR 1.